Consider the following 477-residue polypeptide: S-triazine hydrolase (477 aa).

Low complexity-rich tracts occupy residues 38 to 73 (SPTT…KSSS) and 120 to 132 (PLSS…DPTT). Disordered regions lie at residues 38–77 (SPTT…GVVH) and 120–143 (PLSS…GSPF).

It belongs to the metallo-dependent hydrolases superfamily. ATZ/TRZ family.

Its pathway is xenobiotic degradation; melamine degradation. In terms of biological role, hydrolytic deamination of the S-triazine substrate melamine. The sequence is that of S-triazine hydrolase (trzA) from Gordonia rubripertincta (Rhodococcus corallinus).